Reading from the N-terminus, the 519-residue chain is Signal transduction histidine-protein kinase/phosphatase MprB (519 aa).

At M1–L26 the chain is on the cytoplasmic side. A helical membrane pass occupies residues L27 to I47. The Extracellular segment spans residues S48–R163. The helical transmembrane segment at W164–V184 threads the bilayer. Residues T185–R519 lie on the Cytoplasmic side of the membrane. The region spanning R186–E238 is the HAMP domain. Residues D246–P466 enclose the Histidine kinase domain. H249 is subject to Phosphohistidine; by autocatalysis.

Requires Mg(2+) as cofactor. It depends on Mn(2+) as a cofactor. In terms of processing, autophosphorylated.

The protein localises to the cell membrane. The enzyme catalyses ATP + protein L-histidine = ADP + protein N-phospho-L-histidine.. Member of the two-component regulatory system MprB/MprA which contributes to maintaining a balance among several systems involved in stress resistance and is required for establishment and maintenance of persistent infection in the host. In response to environmental signals MprB acts both as a membrane-associated protein kinase that undergoes autophosphorylation and subsequently transfers the phosphate to MprA, and a protein phosphatase that dephosphorylates phospho-MprA. The sequence is that of Signal transduction histidine-protein kinase/phosphatase MprB (mprB) from Mycobacterium leprae (strain TN).